Consider the following 391-residue polypeptide: Lipoyl synthase, mitochondrial (391 aa).

The transit peptide at 1–44 (MVHPHLSRTKRTFFSHSSQMISRHIRKTNSLAFVRALSASETAV) directs the protein to the mitochondrion. [4Fe-4S] cluster-binding residues include Cys120, Cys125, Cys131, Cys150, Cys154, Cys157, and Ser365. The 220-residue stretch at 135–354 (KKSEATATIM…KEVALEMGFL (220 aa)) folds into the Radical SAM core domain.

Belongs to the radical SAM superfamily. Lipoyl synthase family. It depends on [4Fe-4S] cluster as a cofactor.

The protein localises to the mitochondrion. The catalysed reaction is [[Fe-S] cluster scaffold protein carrying a second [4Fe-4S](2+) cluster] + N(6)-octanoyl-L-lysyl-[protein] + 2 oxidized [2Fe-2S]-[ferredoxin] + 2 S-adenosyl-L-methionine + 4 H(+) = [[Fe-S] cluster scaffold protein] + N(6)-[(R)-dihydrolipoyl]-L-lysyl-[protein] + 4 Fe(3+) + 2 hydrogen sulfide + 2 5'-deoxyadenosine + 2 L-methionine + 2 reduced [2Fe-2S]-[ferredoxin]. It participates in protein modification; protein lipoylation via endogenous pathway; protein N(6)-(lipoyl)lysine from octanoyl-[acyl-carrier-protein]: step 2/2. Its function is as follows. Catalyzes the radical-mediated insertion of two sulfur atoms into the C-6 and C-8 positions of the octanoyl moiety bound to the lipoyl domains of lipoate-dependent enzymes, thereby converting the octanoylated domains into lipoylated derivatives. The chain is Lipoyl synthase, mitochondrial from Clavispora lusitaniae (strain ATCC 42720) (Yeast).